Consider the following 157-residue polypeptide: 2-C-methyl-D-erythritol 2,4-cyclodiphosphate synthase (157 aa).

A divalent metal cation is bound by residues D8 and H10. Residues 8–10 (DVH) and 34–35 (HS) each bind 4-CDP-2-C-methyl-D-erythritol 2-phosphate. A divalent metal cation is bound at residue H42. 4-CDP-2-C-methyl-D-erythritol 2-phosphate contacts are provided by residues 56–58 (DIG), 61–65 (FPDTD), 100–106 (AQAPKMA), 132–135 (TTSE), F139, and R142.

The protein belongs to the IspF family. In terms of assembly, homotrimer. A divalent metal cation is required as a cofactor.

It catalyses the reaction 4-CDP-2-C-methyl-D-erythritol 2-phosphate = 2-C-methyl-D-erythritol 2,4-cyclic diphosphate + CMP. The protein operates within isoprenoid biosynthesis; isopentenyl diphosphate biosynthesis via DXP pathway; isopentenyl diphosphate from 1-deoxy-D-xylulose 5-phosphate: step 4/6. In terms of biological role, involved in the biosynthesis of isopentenyl diphosphate (IPP) and dimethylallyl diphosphate (DMAPP), two major building blocks of isoprenoid compounds. Catalyzes the conversion of 4-diphosphocytidyl-2-C-methyl-D-erythritol 2-phosphate (CDP-ME2P) to 2-C-methyl-D-erythritol 2,4-cyclodiphosphate (ME-CPP) with a corresponding release of cytidine 5-monophosphate (CMP). This Photobacterium profundum (strain SS9) protein is 2-C-methyl-D-erythritol 2,4-cyclodiphosphate synthase.